The following is a 50-amino-acid chain: Protein PndA (50 aa).

A helical membrane pass occupies residues 5 to 25 (TFLMMLIVVCVTILCFVWMVR).

The protein belongs to the Hok/Gef family.

The protein localises to the cell inner membrane. Functionally, when overexpressed kill the cells from the inside by interfering with a vital function in the cell membrane. Its function is as follows. Toxic component of a type I toxin-antitoxin (TA) system. When expressed is involved in cellular Mg(2+) release and degradation of stable RNA. In Escherichia coli, this protein is Protein PndA (pndA).